The following is a 122-amino-acid chain: Small ribosomal subunit protein uS13 (122 aa).

The interval 95–122 is disordered; the sequence is GLPVHGQRTKTNARTRKGPARTVAGKKK.

The protein belongs to the universal ribosomal protein uS13 family. As to quaternary structure, part of the 30S ribosomal subunit. Forms a loose heterodimer with protein S19. Forms two bridges to the 50S subunit in the 70S ribosome.

Its function is as follows. Located at the top of the head of the 30S subunit, it contacts several helices of the 16S rRNA. In the 70S ribosome it contacts the 23S rRNA (bridge B1a) and protein L5 of the 50S subunit (bridge B1b), connecting the 2 subunits; these bridges are implicated in subunit movement. Contacts the tRNAs in the A and P-sites. The chain is Small ribosomal subunit protein uS13 from Geotalea uraniireducens (strain Rf4) (Geobacter uraniireducens).